The following is a 209-amino-acid chain: dITP/XTP pyrophosphatase (209 aa).

7–12 (SSHGYK) provides a ligand contact to substrate. The Proton acceptor role is filled by Asp70. Asp70 is a Mg(2+) binding site. Residues Ser71, 154–157 (FGYD), Lys177, and 182–183 (HR) each bind substrate.

This sequence belongs to the HAM1 NTPase family. Homodimer. Mg(2+) serves as cofactor.

It catalyses the reaction XTP + H2O = XMP + diphosphate + H(+). The enzyme catalyses dITP + H2O = dIMP + diphosphate + H(+). It carries out the reaction ITP + H2O = IMP + diphosphate + H(+). Functionally, pyrophosphatase that catalyzes the hydrolysis of nucleoside triphosphates to their monophosphate derivatives, with a high preference for the non-canonical purine nucleotides XTP (xanthosine triphosphate), dITP (deoxyinosine triphosphate) and ITP. Seems to function as a house-cleaning enzyme that removes non-canonical purine nucleotides from the nucleotide pool, thus preventing their incorporation into DNA/RNA and avoiding chromosomal lesions. The chain is dITP/XTP pyrophosphatase from Chlamydia trachomatis serovar A (strain ATCC VR-571B / DSM 19440 / HAR-13).